The chain runs to 324 residues: Beta-ketoacyl-[acyl-carrier-protein] synthase III (324 aa).

Catalysis depends on residues C112 and H249. An ACP-binding region spans residues 250 to 254 (QANDR). N279 is an active-site residue.

This sequence belongs to the thiolase-like superfamily. FabH family. In terms of assembly, homodimer.

The protein localises to the cytoplasm. It catalyses the reaction malonyl-[ACP] + acetyl-CoA + H(+) = 3-oxobutanoyl-[ACP] + CO2 + CoA. It participates in lipid metabolism; fatty acid biosynthesis. Functionally, catalyzes the condensation reaction of fatty acid synthesis by the addition to an acyl acceptor of two carbons from malonyl-ACP. Catalyzes the first condensation reaction which initiates fatty acid synthesis and may therefore play a role in governing the total rate of fatty acid production. Possesses both acetoacetyl-ACP synthase and acetyl transacylase activities. Its substrate specificity determines the biosynthesis of branched-chain and/or straight-chain of fatty acids. The chain is Beta-ketoacyl-[acyl-carrier-protein] synthase III from Streptococcus pneumoniae serotype 19F (strain G54).